The chain runs to 704 residues: Phytyl ester synthase 1, chloroplastic (704 aa).

The transit peptide at 1–27 (MATCSSSLLVLPNLRLSSNQRRNFKVR) directs the protein to the chloroplast.

This sequence belongs to the diacylglycerol acyltransferase family. In terms of assembly, interacts with PGM48. In terms of tissue distribution, mostly expressed in flowers (e.g. sepals, petals and stamen).

Its subcellular location is the plastid. It localises to the chloroplast. It is found in the plastoglobule. It catalyses the reaction a 1,2-diacyl-3-O-(beta-D-galactosyl)-sn-glycerol + a 1,2-diacylglycerol = an acyl-3-O-(beta-D-galactosyl)-sn-glycerol + a triacylglycerol. The enzyme catalyses a 1,2-diacylglycerol + a fatty acyl-CoA = a triacylglycerol + CoA. It carries out the reaction a fatty acyl-[ACP] + a 1,2-diacylglycerol = a triacylglycerol + holo-[ACP]. The catalysed reaction is phytol + a fatty acyl-CoA = a fatty acid phytyl ester + CoA. It catalyses the reaction phytol + tetradecanoyl-CoA = tetradecanoate phytyl ester + CoA. The enzyme catalyses a 1,3-diacylglycerol + a fatty acyl-CoA = a triacylglycerol + CoA. It carries out the reaction 1,2-dihexanoylglycerol + tetradecanoyl-CoA = 1,2-dihexanoyl-3-tetradecanoylglycerol + CoA. The catalysed reaction is 1,2-dihexanoylglycerol + hexadecanoyl-CoA = 1,2-dihexanoyl-3-hexadecanoylglycerol + CoA. It catalyses the reaction 1,2-dihexanoylglycerol + octadecanoyl-CoA = 1,2-dihexanoyl-3-octadecanoylglycerol + CoA. The enzyme catalyses (7Z,10Z,13Z)-hexadecatrienoyl-CoA + 1,2-dihexanoylglycerol = 1,2-dihexanoyl-3-(7Z,10Z,13Z-hexadecatrienoyl)-glycerol + CoA. It carries out the reaction 1,2-dihexanoylglycerol + (9Z)-octadecenoyl-CoA = 1,2-dihexanoyl-3-(9Z-octadecenoyl)-glycerol + CoA. The catalysed reaction is 1,2-dihexanoylglycerol + (9Z,12Z,15Z)-octadecatrienoyl-CoA = 1,2-dihexanoyl-3-(9Z,12Z,15Z-octadecatrienoyl)-glycerol + CoA. It catalyses the reaction phytol + decanoyl-CoA = decanoate phytyl ester + CoA. The enzyme catalyses (7Z,10Z,13Z)-hexadecatrienoyl-CoA + phytol = (7Z,10Z,13Z)-hexadecatrienoate phytyl ester + CoA. It carries out the reaction phytol + dodecanoyl-CoA = dodecanoate phytyl ester + CoA. Its function is as follows. Acyltransferase involved in fatty acid phytyl ester synthesis in chloroplasts, a process required for the maintenance of the photosynthetic membrane integrity during abiotic stress and senescence. Exhibits phytyl ester synthesis and diacylglycerol acyltransferase activities with broad substrate specificities, and can employ acyl-CoAs, acyl carrier proteins, and galactolipids as acyl donors. The chain is Phytyl ester synthase 1, chloroplastic from Arabidopsis thaliana (Mouse-ear cress).